Reading from the N-terminus, the 326-residue chain is Olfactory receptor 11H2 (326 aa).

Residues 1–44 (MCPLTLHVTGLMNVSEPNSSFAFVNEFILQGFSCEWTIQIFLFS) are Extracellular-facing. N-linked (GlcNAc...) asparagine glycosylation is found at Asn13 and Asn18. A helical membrane pass occupies residues 45-65 (LFTTIYALTITGNGAIAFVLW). At 66–72 (CDRRLHT) the chain is on the cytoplasmic side. A helical transmembrane segment spans residues 73 to 93 (PMYMFLGNFSFLEIWYVSSTV). Residues 94-112 (PKMLVNFLSEKKNISFAGC) lie on the Extracellular side of the membrane. N-linked (GlcNAc...) asparagine glycosylation occurs at Asn106. Cys112 and Cys194 are joined by a disulfide. A helical membrane pass occupies residues 113-133 (FLQFYFFFSLGTSECLLLTVM). Over 134 to 158 (AFDQYLAICRPLLYPNIMTGHLYAK) the chain is Cytoplasmic. The chain crosses the membrane as a helical span at residues 159–179 (LVILCWVCGFLWFLIPIVLIS). Topologically, residues 180-216 (QKPFCGPNIIDHVVCDPGPLFALDCVSAPRIQLFCYT) are extracellular. A helical transmembrane segment spans residues 217-237 (LSSLVIFGNFLFIIGSYTLVL). The Cytoplasmic portion of the chain corresponds to 238–259 (KAVLGMPSSTGRHKAFSTCGSH). Residues 260–280 (LAVVSLCYSPLMVMYVSPGLG) traverse the membrane as a helical segment. The Extracellular segment spans residues 281–287 (HSTGMQK). A helical membrane pass occupies residues 288 to 308 (IETLFYAMVTPLFNPLIYSLQ). Topologically, residues 309-326 (NKEIKAALRKVLGSSNII) are cytoplasmic.

It belongs to the G-protein coupled receptor 1 family.

It is found in the cell membrane. Odorant receptor. This chain is Olfactory receptor 11H2 (OR11H2), found in Homo sapiens (Human).